The sequence spans 355 residues: Uroporphyrinogen decarboxylase (355 aa).

Substrate is bound by residues 27–31 (RQAGR), D77, Y154, T209, and H327.

It belongs to the uroporphyrinogen decarboxylase family. Homodimer.

The protein localises to the cytoplasm. It carries out the reaction uroporphyrinogen III + 4 H(+) = coproporphyrinogen III + 4 CO2. It participates in porphyrin-containing compound metabolism; protoporphyrin-IX biosynthesis; coproporphyrinogen-III from 5-aminolevulinate: step 4/4. Its function is as follows. Catalyzes the decarboxylation of four acetate groups of uroporphyrinogen-III to yield coproporphyrinogen-III. This chain is Uroporphyrinogen decarboxylase, found in Yersinia enterocolitica serotype O:8 / biotype 1B (strain NCTC 13174 / 8081).